We begin with the raw amino-acid sequence, 381 residues long: Erythronate-4-phosphate dehydrogenase (381 aa).

Positions 45 and 67 each coordinate substrate. NAD(+) is bound by residues Asp148, 207 to 209 (ASR), and Asp233. Arg209 is a catalytic residue. Residue Glu238 is part of the active site. His255 serves as the catalytic Proton donor. Residue Gly258 coordinates NAD(+).

Belongs to the D-isomer specific 2-hydroxyacid dehydrogenase family. PdxB subfamily. Homodimer.

The protein localises to the cytoplasm. It carries out the reaction 4-phospho-D-erythronate + NAD(+) = (R)-3-hydroxy-2-oxo-4-phosphooxybutanoate + NADH + H(+). Its pathway is cofactor biosynthesis; pyridoxine 5'-phosphate biosynthesis; pyridoxine 5'-phosphate from D-erythrose 4-phosphate: step 2/5. Catalyzes the oxidation of erythronate-4-phosphate to 3-hydroxy-2-oxo-4-phosphonooxybutanoate. In Idiomarina loihiensis (strain ATCC BAA-735 / DSM 15497 / L2-TR), this protein is Erythronate-4-phosphate dehydrogenase.